Consider the following 674-residue polypeptide: Ribosome biogenesis protein BOP1 homolog (674 aa).

The disordered stretch occupies residues 1 to 28 (MASTSAATPLKNKRKFENGKKKPKTLKD). Over residues 15 to 28 (KFENGKKKPKTLKD) the composition is skewed to basic and acidic residues. 7 WD repeats span residues 342 to 384 (GHTG…KTFQ), 386 to 425 (DGEV…RLHV), 427 to 458 (QTEA…LMLK), 459 to 500 (MPNE…SQCP), 503 to 541 (KRKG…LVKK), 587 to 626 (HHTA…DFVK), and 643 to 674 (PNDL…LFTY).

This sequence belongs to the WD repeat BOP1/ERB1 family.

The protein resides in the nucleus. Its subcellular location is the nucleolus. It is found in the nucleoplasm. Required for maturation of ribosomal RNAs and formation of the large ribosomal subunit. This is Ribosome biogenesis protein BOP1 homolog from Caenorhabditis elegans.